The following is a 202-amino-acid chain: Orotate phosphoribosyltransferase (202 aa).

Residues Arg94, Lys98, His100, and 120–128 contribute to the 5-phospho-alpha-D-ribose 1-diphosphate site; that span reads EDLISTGGS. An orotate-binding site is contributed by Ser124.

This sequence belongs to the purine/pyrimidine phosphoribosyltransferase family. PyrE subfamily. In terms of assembly, homodimer. Requires Mg(2+) as cofactor.

The enzyme catalyses orotidine 5'-phosphate + diphosphate = orotate + 5-phospho-alpha-D-ribose 1-diphosphate. The protein operates within pyrimidine metabolism; UMP biosynthesis via de novo pathway; UMP from orotate: step 1/2. Its function is as follows. Catalyzes the transfer of a ribosyl phosphate group from 5-phosphoribose 1-diphosphate to orotate, leading to the formation of orotidine monophosphate (OMP). The sequence is that of Orotate phosphoribosyltransferase from Oceanobacillus iheyensis (strain DSM 14371 / CIP 107618 / JCM 11309 / KCTC 3954 / HTE831).